Consider the following 188-residue polypeptide: Elongation factor P (188 aa).

At Lys-34 the chain carries N6-(3,6-diaminohexanoyl)-5-hydroxylysine.

The protein belongs to the elongation factor P family. In terms of processing, may be beta-lysylated on the epsilon-amino group of Lys-34 by the combined action of EpmA and EpmB, and then hydroxylated on the C5 position of the same residue by EpmC (if this protein is present). Lysylation is critical for the stimulatory effect of EF-P on peptide-bond formation. The lysylation moiety may extend toward the peptidyltransferase center and stabilize the terminal 3-CCA end of the tRNA. Hydroxylation of the C5 position on Lys-34 may allow additional potential stabilizing hydrogen-bond interactions with the P-tRNA.

It is found in the cytoplasm. The protein operates within protein biosynthesis; polypeptide chain elongation. Functionally, involved in peptide bond synthesis. Alleviates ribosome stalling that occurs when 3 or more consecutive Pro residues or the sequence PPG is present in a protein, possibly by augmenting the peptidyl transferase activity of the ribosome. Modification of Lys-34 is required for alleviation. In Stenotrophomonas maltophilia (strain R551-3), this protein is Elongation factor P.